A 394-amino-acid polypeptide reads, in one-letter code: N-acetylgalactosamine-6-phosphate deacetylase (394 aa).

E137 lines the Zn(2+) pocket. 148–149 (CH) is a substrate binding site. Positions 201 and 222 each coordinate Zn(2+). Substrate contacts are provided by residues 225–226 (NG), R233, and 254–257 (DGQH). The active-site Proton donor/acceptor is D280. 313–315 (LAG) provides a ligand contact to substrate.

It belongs to the metallo-dependent hydrolases superfamily. NagA family.

It localises to the cytoplasm. The enzyme catalyses N-acetyl-D-galactosamine 6-phosphate + H2O = D-galactosamine 6-phosphate + acetate. It carries out the reaction N-acetyl-D-glucosamine 6-phosphate + H2O = D-glucosamine 6-phosphate + acetate. Functionally, involved in the pathway of N-acetyl-D-galactosamine degradation. Catalyzes the conversion of N-acetyl-D-galactosamine 6-phosphate to D-galactosamine 6-phosphate and acetate. It can also catalyze the conversion of N-acetyl-D-glucosamine 6-phosphate. The protein is N-acetylgalactosamine-6-phosphate deacetylase of Shewanella sp. (strain ANA-3).